The following is a 122-amino-acid chain: Large ribosomal subunit protein uL18 (122 aa).

Belongs to the universal ribosomal protein uL18 family. Part of the 50S ribosomal subunit; part of the 5S rRNA/L5/L18/L25 subcomplex. Contacts the 5S and 23S rRNAs.

Functionally, this is one of the proteins that bind and probably mediate the attachment of the 5S RNA into the large ribosomal subunit, where it forms part of the central protuberance. In Thermotoga neapolitana (strain ATCC 49049 / DSM 4359 / NBRC 107923 / NS-E), this protein is Large ribosomal subunit protein uL18.